A 340-amino-acid polypeptide reads, in one-letter code: 4-dimethylallyltryptophan N-methyltransferase ifgB (340 aa).

The protein belongs to the methyltransferase superfamily. Homodimer.

The catalysed reaction is 4-(3-methylbut-2-enyl)-L-tryptophan + S-adenosyl-L-methionine = 4-(3-methylbut-2-enyl)-L-abrine + S-adenosyl-L-homocysteine + H(+). The protein operates within alkaloid biosynthesis; ergot alkaloid biosynthesis. Its function is as follows. 4-dimethylallyltryptophan N-methyltransferase; part of the gene cluster that mediates the biosynthesis of isofumigaclavines, fungal ergot alkaloids. The tryptophan dimethylallyltransferase ifgA catalyzes the first step of ergot alkaloid biosynthesis by condensing dimethylallyl diphosphate (DMAP) and tryptophan to form 4-dimethylallyl-L-tryptophan. The second step is catalyzed by the methyltransferase ifgB that methylates 4-dimethylallyl-L-tryptophan in the presence of S-adenosyl-L-methionine, resulting in the formation of N-methyl-dimethylallyl-L-tryptophan. The catalase ifgD and the FAD-dependent oxidoreductase ifgC then transform N-methyl-dimethylallyl-L-tryptophan to chanoclavine-I which is further oxidized by ifgE in the presence of NAD(+), resulting in the formation of chanoclavine-I aldehyde. The chanoclavine-I aldehyde reductases ifgG and/or fgaOx3 reduce chanoclavine-I aldehyde to dihydrochanoclavine-I aldehyde that spontaneously dehydrates to form 6,8-dimethyl-6,7-didehydroergoline. The festuclavine dehydrogenases ifgF1 and/or ifgF2 then catalyze the reduction of 6,8-dimethyl-6,7-didehydroergoline to form festuclavine. Hydrolysis of festuclavine by a yet undetermined cytochrome P450 monooxygenase (called ifgH) then leads to the formation of isofumigaclavine B which is in turn acetylated by ifgI to isofumigaclavine A. Penicillium roqueforti has interestingly at least two sets of genes for the consumption of chanoclavine-I aldehyde on three different loci, the OYEs ifgG/fgaOx3 and the festuclavine synthase homologs ifgF1/ifgF2. The reason for the duplication of these genes is unclear, probably to ensure the conversion of chanoclavine-I aldehyde by differential gene expression under various environmental conditions. The sequence is that of 4-dimethylallyltryptophan N-methyltransferase ifgB from Penicillium roqueforti (strain FM164).